Here is a 117-residue protein sequence, read N- to C-terminus: Probable prefoldin subunit 1 (117 aa).

It belongs to the prefoldin subunit beta family. Heterohexamer of two PFD-alpha type and four PFD-beta type subunits. In terms of tissue distribution, expressed in the distal cell tip of developing embryos.

The protein resides in the cytoplasm. Binds specifically to cytosolic chaperonin (c-CPN) and transfers target proteins to it. Binds to nascent polypeptide chain and promotes folding in an environment in which there are many competing pathways for nonnative proteins. Has a role in gonadogenesis. This is Probable prefoldin subunit 1 (pfd-1) from Caenorhabditis elegans.